Consider the following 275-residue polypeptide: Stage 0 sporulation protein YaaT (275 aa).

The PSP1 C-terminal domain maps to 61–146 (RKVIRVADDR…FKTRIELRQI (86 aa)).

The protein localises to the cytoplasm. Functionally, essential for the phosphorelay during initiation of sporulation. May control the level of phosphorylated spo0A through spo0E activity during sporulation. The protein is Stage 0 sporulation protein YaaT (yaaT) of Bacillus subtilis (strain 168).